We begin with the raw amino-acid sequence, 456 residues long: tRNA-2-methylthio-N(6)-dimethylallyladenosine synthase (456 aa).

Residues 17–135 (KLYLIQSFGC…LPRMIHQVQE (119 aa)) enclose the MTTase N-terminal domain. Residues C26, C62, C96, C172, C176, and C179 each contribute to the [4Fe-4S] cluster site. The Radical SAM core domain maps to 158–387 (RKDKLKAWVT…IELQNLISLE (230 aa)). Positions 390 to 453 (QREEGRVLEV…PNLLEGEVVP (64 aa)) constitute a TRAM domain.

It belongs to the methylthiotransferase family. MiaB subfamily. In terms of assembly, monomer. [4Fe-4S] cluster is required as a cofactor.

It localises to the cytoplasm. It carries out the reaction N(6)-dimethylallyladenosine(37) in tRNA + (sulfur carrier)-SH + AH2 + 2 S-adenosyl-L-methionine = 2-methylsulfanyl-N(6)-dimethylallyladenosine(37) in tRNA + (sulfur carrier)-H + 5'-deoxyadenosine + L-methionine + A + S-adenosyl-L-homocysteine + 2 H(+). Its function is as follows. Catalyzes the methylthiolation of N6-(dimethylallyl)adenosine (i(6)A), leading to the formation of 2-methylthio-N6-(dimethylallyl)adenosine (ms(2)i(6)A) at position 37 in tRNAs that read codons beginning with uridine. In Desulforamulus reducens (strain ATCC BAA-1160 / DSM 100696 / MI-1) (Desulfotomaculum reducens), this protein is tRNA-2-methylthio-N(6)-dimethylallyladenosine synthase.